Consider the following 306-residue polypeptide: 17-beta-hydroxysteroid dehydrogenase type 3 (306 aa).

44–73 contributes to the NADP(+) binding site; it reads GQWAVITGAGDGIGKAYSFELARHGLNVVL. Position 181 (serine 181) interacts with substrate. The active-site Proton acceptor is tyrosine 194.

The protein belongs to the short-chain dehydrogenases/reductases (SDR) family. 17-beta-HSD 3 subfamily.

It is found in the endoplasmic reticulum. It carries out the reaction a 17beta-hydroxy steroid + NADP(+) = a 17-oxo steroid + NADPH + H(+). The enzyme catalyses testosterone + NADP(+) = androst-4-ene-3,17-dione + NADPH + H(+). The catalysed reaction is 17beta-estradiol + NADP(+) = estrone + NADPH + H(+). It catalyses the reaction 3beta-hydroxyandrost-5-en-17-one + NADPH + H(+) = androst-5-en-3beta,17beta-diol + NADP(+). It carries out the reaction 17beta-hydroxy-5alpha-androstan-3-one + NADP(+) = 5alpha-androstan-3,17-dione + NADPH + H(+). The enzyme catalyses androsterone + NADPH + H(+) = 5alpha-androstane-3alpha,17beta-diol + NADP(+). The catalysed reaction is 3beta-hydroxy-5alpha-androstan-17-one + NADPH + H(+) = 5alpha-androstane-3beta,17beta-diol + NADP(+). It catalyses the reaction androst-4-ene-3,11,17-trione + NADPH + H(+) = 17beta-hydroxyandrost-4-ene-3,11-dione + NADP(+). It carries out the reaction 11beta-hydroxyandrost-4-ene-3,17-dione + NADPH + H(+) = 11beta,17beta-dihydroxyandrost-4-ene-3-one + NADP(+). It functions in the pathway hormone biosynthesis; testosterone biosynthesis. The protein operates within steroid metabolism. In terms of biological role, catalyzes the conversion of 17-oxosteroids to 17beta-hydroxysteroids. Favors the reduction of androstenedione to testosterone. Testosterone is the key androgen driving male development and function. Uses NADPH while the two other EDH17B enzymes use NADH. Androgens such as epiandrosterone, dehydroepiandrosterone, androsterone and androstanedione are accepted as substrates and reduced at C-17. Can reduce 11-ketoandrostenedione as well as 11beta-hydroxyandrostenedione at C-17 to the respective testosterone forms. Plays a role in the rate-limiting-step for the maximum level of testosterone production by the testis but does not affect basal testosterone production. In Rattus norvegicus (Rat), this protein is 17-beta-hydroxysteroid dehydrogenase type 3.